We begin with the raw amino-acid sequence, 216 residues long: Imidazole glycerol phosphate synthase subunit HisH (216 aa).

One can recognise a Glutamine amidotransferase type-1 domain in the interval 2–216 (RVAIIDYGSG…LISNFLRWKP (215 aa)). Residue C88 is the Nucleophile of the active site. Residues H196 and E198 contribute to the active site.

As to quaternary structure, heterodimer of HisH and HisF.

The protein resides in the cytoplasm. The catalysed reaction is 5-[(5-phospho-1-deoxy-D-ribulos-1-ylimino)methylamino]-1-(5-phospho-beta-D-ribosyl)imidazole-4-carboxamide + L-glutamine = D-erythro-1-(imidazol-4-yl)glycerol 3-phosphate + 5-amino-1-(5-phospho-beta-D-ribosyl)imidazole-4-carboxamide + L-glutamate + H(+). It carries out the reaction L-glutamine + H2O = L-glutamate + NH4(+). The protein operates within amino-acid biosynthesis; L-histidine biosynthesis; L-histidine from 5-phospho-alpha-D-ribose 1-diphosphate: step 5/9. In terms of biological role, IGPS catalyzes the conversion of PRFAR and glutamine to IGP, AICAR and glutamate. The HisH subunit catalyzes the hydrolysis of glutamine to glutamate and ammonia as part of the synthesis of IGP and AICAR. The resulting ammonia molecule is channeled to the active site of HisF. The chain is Imidazole glycerol phosphate synthase subunit HisH from Agrobacterium fabrum (strain C58 / ATCC 33970) (Agrobacterium tumefaciens (strain C58)).